A 289-amino-acid chain; its full sequence is ATP phosphoribosyltransferase (289 aa).

The protein belongs to the ATP phosphoribosyltransferase family. Long subfamily. The cofactor is Mg(2+).

Its subcellular location is the cytoplasm. It carries out the reaction 1-(5-phospho-beta-D-ribosyl)-ATP + diphosphate = 5-phospho-alpha-D-ribose 1-diphosphate + ATP. The protein operates within amino-acid biosynthesis; L-histidine biosynthesis; L-histidine from 5-phospho-alpha-D-ribose 1-diphosphate: step 1/9. Its activity is regulated as follows. Feedback inhibited by histidine. Functionally, catalyzes the condensation of ATP and 5-phosphoribose 1-diphosphate to form N'-(5'-phosphoribosyl)-ATP (PR-ATP). Has a crucial role in the pathway because the rate of histidine biosynthesis seems to be controlled primarily by regulation of HisG enzymatic activity. The polypeptide is ATP phosphoribosyltransferase (Methanosarcina barkeri (strain Fusaro / DSM 804)).